The primary structure comprises 90 residues: CRISPR-associated endonuclease Cas2 2 (90 aa).

Asp11 serves as a coordination point for Mg(2+).

It belongs to the CRISPR-associated endoribonuclease Cas2 protein family. As to quaternary structure, homodimer, forms a heterotetramer with a Cas1 homodimer. Requires Mn(2+) as cofactor. Mg(2+) serves as cofactor.

With respect to regulation, inhibited by EDTA and at pH 6.0. In terms of biological role, CRISPR (clustered regularly interspaced short palindromic repeat), is an adaptive immune system that provides protection against mobile genetic elements (viruses, transposable elements and conjugative plasmids). CRISPR clusters contain sequences complementary to antecedent mobile elements and target invading nucleic acids. CRISPR clusters are transcribed and processed into CRISPR RNA (crRNA). Involved in the integration of spacer DNA into the CRISPR cassette. Functions as a dsDNA endonuclease and as a weak ssRNase. This Thermus thermophilus (strain ATCC BAA-163 / DSM 7039 / HB27) protein is CRISPR-associated endonuclease Cas2 2 (cas2b).